The primary structure comprises 267 residues: Methyl-coenzyme M reductase II subunit gamma (267 aa).

Arg-123 serves as a coordination point for coenzyme M.

Belongs to the methyl-coenzyme M reductase gamma subunit family. MCR is a hexamer of two alpha, two beta, and two gamma chains, forming a dimer of heterotrimers. It depends on coenzyme F430 as a cofactor.

The enzyme catalyses coenzyme B + methyl-coenzyme M = methane + coenzyme M-coenzyme B heterodisulfide. Its pathway is one-carbon metabolism; methyl-coenzyme M reduction; methane from methyl-coenzyme M: step 1/1. Component of the methyl-coenzyme M reductase (MCR) I that catalyzes the reductive cleavage of methyl-coenzyme M (CoM-S-CH3 or 2-(methylthio)ethanesulfonate) using coenzyme B (CoB or 7-mercaptoheptanoylthreonine phosphate) as reductant which results in the production of methane and the mixed heterodisulfide of CoB and CoM (CoM-S-S-CoB). This is the final step in methanogenesis. In Methanothermus fervidus (strain ATCC 43054 / DSM 2088 / JCM 10308 / V24 S), this protein is Methyl-coenzyme M reductase II subunit gamma (mrtG).